A 261-amino-acid polypeptide reads, in one-letter code: tRNA pseudouridine synthase A (261 aa).

Aspartate 51 serves as the catalytic Nucleophile. Tyrosine 109 serves as a coordination point for substrate.

This sequence belongs to the tRNA pseudouridine synthase TruA family. In terms of assembly, homodimer.

It catalyses the reaction uridine(38/39/40) in tRNA = pseudouridine(38/39/40) in tRNA. Functionally, formation of pseudouridine at positions 38, 39 and 40 in the anticodon stem and loop of transfer RNAs. This Shewanella frigidimarina (strain NCIMB 400) protein is tRNA pseudouridine synthase A.